A 156-amino-acid polypeptide reads, in one-letter code: Small ribosomal subunit protein uS7 (156 aa).

It belongs to the universal ribosomal protein uS7 family. As to quaternary structure, part of the 30S ribosomal subunit. Contacts proteins S9 and S11.

Its function is as follows. One of the primary rRNA binding proteins, it binds directly to 16S rRNA where it nucleates assembly of the head domain of the 30S subunit. Is located at the subunit interface close to the decoding center, probably blocks exit of the E-site tRNA. The chain is Small ribosomal subunit protein uS7 from Alkaliphilus oremlandii (strain OhILAs) (Clostridium oremlandii (strain OhILAs)).